The following is a 216-amino-acid chain: Peptide deformylase (216 aa).

Residues Cys-134 and His-178 each coordinate Fe cation. Glu-179 is an active-site residue. Fe cation is bound at residue His-182.

The protein belongs to the polypeptide deformylase family. It depends on Fe(2+) as a cofactor.

The enzyme catalyses N-terminal N-formyl-L-methionyl-[peptide] + H2O = N-terminal L-methionyl-[peptide] + formate. In terms of biological role, removes the formyl group from the N-terminal Met of newly synthesized proteins. Requires at least a dipeptide for an efficient rate of reaction. N-terminal L-methionine is a prerequisite for activity but the enzyme has broad specificity at other positions. This Mycoplasma pneumoniae (strain ATCC 29342 / M129 / Subtype 1) (Mycoplasmoides pneumoniae) protein is Peptide deformylase.